Here is a 501-residue protein sequence, read N- to C-terminus: Cobyric acid synthase (501 aa).

The region spanning 253–450 is the GATase cobBQ-type domain; it reads EIEIAVLKLP…LHGIFENGRW (198 aa). C334 acts as the Nucleophile in catalysis. The active site involves H442.

This sequence belongs to the CobB/CobQ family. CobQ subfamily.

It participates in cofactor biosynthesis; adenosylcobalamin biosynthesis. Its function is as follows. Catalyzes amidations at positions B, D, E, and G on adenosylcobyrinic A,C-diamide. NH(2) groups are provided by glutamine, and one molecule of ATP is hydrogenolyzed for each amidation. This chain is Cobyric acid synthase, found in Prochlorococcus marinus (strain MIT 9313).